A 367-amino-acid polypeptide reads, in one-letter code: 5-amino-6-(D-ribitylamino)uracil--L-tyrosine 4-hydroxyphenyl transferase (367 aa).

Residues 56–290 (VTYVRNQNIN…MFAVARLFLD (235 aa)) form the Radical SAM core domain. 3 residues coordinate [4Fe-4S] cluster: C70, C74, and C77.

The protein belongs to the radical SAM superfamily. CofH family. Consists of two subunits, CofG and CofH. It depends on [4Fe-4S] cluster as a cofactor.

The catalysed reaction is 5-amino-6-(D-ribitylamino)uracil + L-tyrosine + S-adenosyl-L-methionine = 5-amino-5-(4-hydroxybenzyl)-6-(D-ribitylimino)-5,6-dihydrouracil + 2-iminoacetate + 5'-deoxyadenosine + L-methionine + H(+). The protein operates within cofactor biosynthesis; coenzyme F0 biosynthesis. In terms of biological role, catalyzes the radical-mediated synthesis of 5-amino-5-(4-hydroxybenzyl)-6-(D-ribitylimino)-5,6-dihydrouracil from 5-amino-6-(D-ribitylamino)uracil and L-tyrosine. The polypeptide is 5-amino-6-(D-ribitylamino)uracil--L-tyrosine 4-hydroxyphenyl transferase (Methanoculleus marisnigri (strain ATCC 35101 / DSM 1498 / JR1)).